A 420-amino-acid polypeptide reads, in one-letter code: FAD-dependent monooxygenase ntnJ (420 aa).

Residues 12–31 (FRVIVVGAGIGGLSAAVALA) form a helical membrane-spanning segment. Residues Glu41 and Ala54 each contribute to the FAD site. An N-linked (GlcNAc...) asparagine glycan is attached at Asn124. Arg187 is a catalytic residue. Residue Asn264 is glycosylated (N-linked (GlcNAc...) asparagine). Positions 302 and 315 each coordinate FAD.

The protein belongs to the paxM FAD-dependent monooxygenase family. FAD serves as cofactor.

The protein resides in the membrane. The protein operates within secondary metabolite biosynthesis; terpenoid biosynthesis. Functionally, FAD-dependent monooxygenase; part of the gene cluster that mediates the biosynthesis of the meroterpenoids nectripenoids A and B, as well as cochliquninone D and isocochliquninone E. The pathway probably begins with the HR-PKS ntnH that catalyzes two chain-extension steps to form a reduced triketide, which then primes the SAT domain in the NR-PKS ntnG to initiate three more cycles of extension to give a linear hexaketide corresponding to the polyketide part of nectripenoids. The FAD-dependent monooxygenase ntnJ then performs an oxidative decarboxylation at C11 of the ntnH/ntnG product, via an electrophilic aromatic hydroxylation with concomitant ipso-decarboxylation. The membrane-bound polyprenyl transferase ntnF then introduces a farnesyl group before the FAD-dependent monooxygenase ntnK functions as the first epoxidase on terminal C12'-C13' olefin, followed by a second epoxidation on C7'-C8' catalyzed by ntnA. The terpene cyclase/mutase ntnI then initiates the sequential tricyclic ring formation through protonation of the terminal epoxide and catalyzes the regioselective and stereoselective 6/6/6-tricyclic ring formation. The cytochrome P450 monooxygenase ntnM may then hydroxylate C1'. The protein is FAD-dependent monooxygenase ntnJ of Nectria sp.